Consider the following 61-residue polypeptide: MMNMKPTESYEQLDNSALEQVVGGKYYGNGVHCTKSGCSVNWGEAFSAGVHRLANGGNGFW.

A propeptide spanning residues 1-24 (MMNMKPTESYEQLDNSALEQVVGG) is cleaved from the precursor. Residues cysteine 33 and cysteine 38 are joined by a disulfide bond.

This sequence belongs to the bacteriocin class IIA/YGNGV family.

It localises to the secreted. Inhibits a wide spectrum of lactic acid bacteria. The sequence is that of Bacteriocin leucocin-A (lcnA) from Leuconostoc gelidum.